The primary structure comprises 219 residues: Probable glutathione S-transferase GSTF1 (219 aa).

A GST N-terminal domain is found at 2-83; that stretch reads TPVKVFGPAQ…YILRKYKTRE (82 aa). Glutathione is bound by residues Ser-12, 41–42, 54–55, and 67–68; these read HK, QI, and ES. One can recognise a GST C-terminal domain in the interval 91–219; that stretch reads NLREAAMVDV…LAAVMAPQGA (129 aa).

It belongs to the GST superfamily. Phi family. As to expression, constitutively expressed in roots.

The enzyme catalyses RX + glutathione = an S-substituted glutathione + a halide anion + H(+). Conjugation of reduced glutathione to a wide number of exogenous and endogenous hydrophobic electrophiles. This chain is Probable glutathione S-transferase GSTF1 (GSTF1), found in Oryza sativa subsp. japonica (Rice).